A 555-amino-acid chain; its full sequence is Glutamine--tRNA ligase (555 aa).

Positions 34 to 44 match the 'HIGH' region motif; that stretch reads PEPNGYLHIGH. ATP contacts are provided by residues 35–37 and 41–47; these read EPN and HIGHAKS. Aspartate 67 and tyrosine 212 together coordinate L-glutamine. ATP-binding positions include threonine 231, 261 to 262, and 269 to 271; these read RL and MSK. Positions 268–272 match the 'KMSKS' region motif; that stretch reads VMSKR. An interaction with tRNA region spans residues 317 to 324; the sequence is TKQDNTIE.

The protein belongs to the class-I aminoacyl-tRNA synthetase family. As to quaternary structure, monomer.

Its subcellular location is the cytoplasm. The catalysed reaction is tRNA(Gln) + L-glutamine + ATP = L-glutaminyl-tRNA(Gln) + AMP + diphosphate. The protein is Glutamine--tRNA ligase of Salmonella agona (strain SL483).